Here is a 362-residue protein sequence, read N- to C-terminus: RNA-binding protein 4 (362 aa).

2 consecutive RRM domains span residues 2–72 (VKLF…ASKN) and 78–148 (TKLH…LSTS). Lysine 79 is covalently cross-linked (Glycyl lysine isopeptide (Lys-Gly) (interchain with G-Cter in SUMO2)). Residue serine 86 is modified to Phosphoserine. A Glycyl lysine isopeptide (Lys-Gly) (interchain with G-Cter in SUMO2) cross-link involves residue lysine 92. The segment at 160 to 177 (SGCYRCGKEGHWSKECPV) adopts a CCHC-type zinc-finger fold. The interval 196–362 (AVRTPYTMGY…YADRARYSAF (167 aa)) is interaction with TNPO3. The interval 306–336 (RSPLRRATGPVPTVGEGYGYGHESELSQGSS) is disordered. Phosphoserine is present on serine 307.

In terms of assembly, interacts with TNPO3; the interaction mediates nuclear import of the protein and is disrupted by nuclear Ran bound to GTP. Interacts with EIF4G1 and WT1. Interacts with EIF4A1; the interaction is modulated under stress-induced conditions. Interacts with AGO1. Interacts with AGO2; the interaction occurs under both cell proliferation and differentiation conditions and in an RNA- and phosphorylation-independent manner. Interacts with DDX5; the interaction occurs in an RNA-independent manner. Interacts with RBPMS; the interaction allows cooperative assembly of RNA-bound stable cell-specific alternative splicing regulatory complexes. Phosphorylated. Phosphorylated in vitro on Ser-307 by SRPK1. Phosphorylation on Ser-307 is induced upon cell stress signaling, which alters its subcellular localization and may modulate its activity on IRES-mediated mRNA translation. Phosphorylation on Ser-307 is induced upon cell muscle differentiation.

The protein resides in the nucleus. Its subcellular location is the nucleolus. It localises to the nucleus speckle. It is found in the cytoplasm. The protein localises to the cytoplasmic granule. In terms of biological role, RNA-binding factor involved in multiple aspects of cellular processes like alternative splicing of pre-mRNA and translation regulation. Modulates alternative 5'-splice site and exon selection. Acts as a muscle cell differentiation-promoting factor. Activates exon skipping of the PTB pre-mRNA during muscle cell differentiation. Antagonizes the activity of the splicing factor PTBP1 to modulate muscle cell-specific exon selection of alpha tropomyosin. Binds to intronic pyrimidine-rich sequence of the TPM1 and MAPT pre-mRNAs. Required for the translational activation of PER1 mRNA in response to circadian clock. Binds directly to the 3'-UTR of the PER1 mRNA. Exerts a suppressive activity on Cap-dependent translation via binding to CU-rich responsive elements within the 3'UTR of mRNAs, a process increased under stress conditions or during myocytes differentiation. Recruits EIF4A1 to stimulate IRES-dependent translation initiation in respons to cellular stress. Associates to internal ribosome entry segment (IRES) in target mRNA species under stress conditions. Plays a role for miRNA-guided RNA cleavage and translation suppression by promoting association of AGO2-containing miRNPs with their cognate target mRNAs. Associates with miRNAs during muscle cell differentiation. Binds preferentially to 5'-CGCGCG[GCA]-3' motif in vitro. The chain is RNA-binding protein 4 (RBM4) from Bos taurus (Bovine).